Here is a 246-residue protein sequence, read N- to C-terminus: uncharacterized protein (246 aa).

This is an uncharacterized protein from Dictyostelium discoideum (Social amoeba).